We begin with the raw amino-acid sequence, 157 residues long: Galactose-specific lectin (157 aa).

The region spanning 12–157 (SIVVGTWGAE…LDYIGFHLAL (146 aa)) is the Jacalin-type lectin domain. Asn45 carries N-linked (GlcNAc...) asparagine glycosylation.

It belongs to the jacalin lectin family. As to quaternary structure, tetramer of heterodimers of light and heavy chains which are non-covalently linked. N-linked carbohydrates at Asn-45 can be of complex or paucimannose type.

Its function is as follows. Alpha-D-galactose-specific lectin. Has hemagglutinating activity towards human and rabbit erythrocytes. Is highly cytotoxic to human cells in vitro. In Morus indica (Mulberry), this protein is Galactose-specific lectin.